A 112-amino-acid polypeptide reads, in one-letter code: ATP synthase epsilon chain (112 aa).

The protein belongs to the ATPase epsilon chain family. As to quaternary structure, F-type ATPases have 2 components, CF(1) - the catalytic core - and CF(0) - the membrane proton channel. CF(1) has five subunits: alpha(3), beta(3), gamma(1), delta(1), epsilon(1). CF(0) has three main subunits: a, b and c.

The protein resides in the cell inner membrane. Its function is as follows. Produces ATP from ADP in the presence of a proton gradient across the membrane. In Rickettsia conorii (strain ATCC VR-613 / Malish 7), this protein is ATP synthase epsilon chain (atpC).